The chain runs to 474 residues: SHC-transforming protein 3 (474 aa).

The segment at 1-27 (MSATRKSRAGDEPLPRPPRGAPHTSDQ) is disordered. Positions 29-214 (LGPGVTYVVK…LDEPWTEEEG (186 aa)) constitute a PID domain. Positions 215–378 (DGPDHPYYNS…RMLEELNAEP (164 aa)) are CH1. The residue at position 282 (Ser282) is a Phosphoserine. Residues 308–328 (QPVPPQVWPAATSSTESSPRK) form a disordered region. The SH2 domain maps to 379–470 (WYQGEMSRKE…GSELCLQQPV (92 aa)).

Interacts with the Trk receptors in a phosphotyrosine-dependent manner. Once activated, binds to GRB2. Interacts with activated EGF receptors. Tyrosine phosphorylated. In terms of tissue distribution, predominantly expressed in the adult brain.

Signaling adapter that couples activated growth factor receptors to signaling pathway in neurons. Involved in the signal transduction pathways of neurotrophin-activated Trk receptors in cortical neurons. The polypeptide is SHC-transforming protein 3 (Shc3) (Mus musculus (Mouse)).